A 51-amino-acid polypeptide reads, in one-letter code: ATP synthase F(1) complex subunit epsilon, mitochondrial (51 aa).

Residues lysine 21, lysine 32, and lysine 37 each carry the N6-acetyllysine; alternate modification. Lysine 21, lysine 32, and lysine 37 each carry N6-succinyllysine; alternate. Lysine 44 is subject to N6-acetyllysine.

The protein belongs to the eukaryotic ATPase epsilon family. In terms of assembly, component of the ATP synthase complex composed at least of ATP5F1A/subunit alpha, ATP5F1B/subunit beta, ATP5MC1/subunit c (homooctomer), MT-ATP6/subunit a, MT-ATP8/subunit 8, ATP5ME/subunit e, ATP5MF/subunit f, ATP5MG/subunit g, ATP5MK/subunit k, ATP5MJ/subunit j, ATP5F1C/subunit gamma, ATP5F1D/subunit delta, ATP5F1E/subunit epsilon, ATP5PF/subunit F6, ATP5PB/subunit b, ATP5PD/subunit d, ATP5PO/subunit OSCP. ATP synthase complex consists of a soluble F(1) head domain (subunits alpha(3) and beta(3)) - the catalytic core - and a membrane F(0) domain - the membrane proton channel (subunits c, a, 8, e, f, g, k and j). These two domains are linked by a central stalk (subunits gamma, delta, and epsilon) rotating inside the F1 region and a stationary peripheral stalk (subunits F6, b, d, and OSCP).

The protein localises to the mitochondrion. It localises to the mitochondrion inner membrane. Its function is as follows. Subunit epsilon, of the mitochondrial membrane ATP synthase complex (F(1)F(0) ATP synthase or Complex V) that produces ATP from ADP in the presence of a proton gradient across the membrane which is generated by electron transport complexes of the respiratory chain. ATP synthase complex consist of a soluble F(1) head domain - the catalytic core - and a membrane F(1) domain - the membrane proton channel. These two domains are linked by a central stalk rotating inside the F(1) region and a stationary peripheral stalk. During catalysis, ATP synthesis in the catalytic domain of F(1) is coupled via a rotary mechanism of the central stalk subunits to proton translocation. In vivo, can only synthesize ATP although its ATP hydrolase activity can be activated artificially in vitro. May be essential for the assembly of F(1) and may play an important role in the incorporation of the hydrophobic subunit c into the F(1)-c oligomer rotor of the mitochondrial ATP synthase complex. This is ATP synthase F(1) complex subunit epsilon, mitochondrial from Bos taurus (Bovine).